The chain runs to 256 residues: MSLDALQQRLGYRFSKPELLQQALTHRSHSAMHNERLEFLGDSILNCAVADMLYGMFGKLDEGDLSRVRANLVKQQALYEIAQMLQLPDALRLGEGELKSGGFRRPSILADALEAIFGAVFLDGGFDAARTLIRKLYIPILEQVDPRTLGKDAKTLLQEYLQGHKIALPLYTVVATHGAAHNQQFEVECSIPKLEIRVSGSGASRRAAEQSAAKLALDEAHRLVPQLVKRSRAERTGKTRKQATPPDPQLSLRLKE.

The region spanning 3–125 is the RNase III domain; the sequence is LDALQQRLGY…IFGAVFLDGG (123 aa). E38 contacts Mg(2+). D42 is a catalytic residue. Residues D111 and E114 each coordinate Mg(2+). The active site involves E114. In terms of domain architecture, DRBM spans 152–222; that stretch reads DAKTLLQEYL…AKLALDEAHR (71 aa). Residues 226–256 form a disordered region; the sequence is QLVKRSRAERTGKTRKQATPPDPQLSLRLKE.

Belongs to the ribonuclease III family. As to quaternary structure, homodimer. Mg(2+) serves as cofactor.

It is found in the cytoplasm. It catalyses the reaction Endonucleolytic cleavage to 5'-phosphomonoester.. Its function is as follows. Digests double-stranded RNA. Involved in the processing of primary rRNA transcript to yield the immediate precursors to the large and small rRNAs (23S and 16S). Processes some mRNAs, and tRNAs when they are encoded in the rRNA operon. Processes pre-crRNA and tracrRNA of type II CRISPR loci if present in the organism. The sequence is that of Ribonuclease 3 from Ralstonia pickettii (strain 12J).